Reading from the N-terminus, the 651-residue chain is Probable potassium transport system protein Kup (651 aa).

12 consecutive transmembrane segments (helical) span residues 41–61 (LVLG…IYAF), 82–102 (VVSL…VLFV), 130–150 (LILG…VITP), 163–183 (IVAP…LVTL), 194–214 (VAIV…ASGL), 235–255 (FLTV…LAMT), 276–296 (WLWI…AFIL), 309–329 (MIPS…TVIA), 366–386 (IYIP…VLGF), 395–415 (AYGI…YIVM), 426–446 (ALPI…ANII), and 450–470 (EGGW…WTWV).

Belongs to the HAK/KUP transporter (TC 2.A.72) family.

The protein resides in the cell inner membrane. It carries out the reaction K(+)(in) + H(+)(in) = K(+)(out) + H(+)(out). Transport of potassium into the cell. Likely operates as a K(+):H(+) symporter. The polypeptide is Probable potassium transport system protein Kup (Brucella canis (strain ATCC 23365 / NCTC 10854 / RM-666)).